The primary structure comprises 585 residues: Zinc finger protein 614 (585 aa).

Positions 8–79 (LTLEDVAVEF…DAKIQNKNCP (72 aa)) constitute a KRAB domain. The C2H2-type 1; atypical zinc finger occupies 205–227 (HACIECEQTFLRKSQLIYHENIC). The C2H2-type 2; degenerate zinc-finger motif lies at 257-281 (KICIPNEYRKGSTVKSSLITHQQTH). 10 consecutive C2H2-type zinc fingers follow at residues 287–309 (YMCSECGKGFTMKRYLIAHQRTH), 315–337 (YVCKECGKGFTVKSNLIVHQRTH), 343–365 (YICSECGKGFTMKRYLVVHQRTH), 371–393 (YMCSECGKGFTVKSNLIVHQRSH), 399–421 (YICSECGKGFTVKRTLVIHQRTH), 427–449 (YICNECGKGFTTKRTLIIHQRTH), 455–477 (YECNECGKAFSQKICLIQHERCH), 483–505 (FVCTECGKSYSHKYGLITHQRIH), 511–533 (YECNECGKAFTTKSVLNVHQRTH), and 539–561 (YGCSDCEKAFSHLSNLVKHKKMH).

Belongs to the krueppel C2H2-type zinc-finger protein family.

It is found in the nucleus. May be involved in transcriptional regulation. This is Zinc finger protein 614 (ZNF614) from Homo sapiens (Human).